A 146-amino-acid chain; its full sequence is MRLLQFLFRASPATLLLVLCLHLGANKAQENTRRIIIQNFEIPTTANRDEEVTAVLQVKTELKECMVAKVYLTSDVPVEGAFNYKYTRCLCDDYPNTYYWDFHTNRTVQIAAVVDIIRELGICPNDAAVTPISKNRFYTIKTLVVA.

A signal peptide spans 1-28; sequence MRLLQFLFRASPATLLLVLCLHLGANKA. Gln-29 carries the post-translational modification Pyrrolidone carboxylic acid. Cystine bridges form between Cys-65–Cys-91 and Cys-89–Cys-123. Asn-105 is a glycosylation site (N-linked (GlcNAc...) asparagine).

Belongs to the PIP family. Monomer. Interacts with AZGP1.

It is found in the secreted. The protein is Prolactin-inducible protein homolog (PIP) of Macaca fuscata fuscata (Japanese macaque).